Here is a 651-residue protein sequence, read N- to C-terminus: DNA mismatch repair protein MutL (651 aa).

The tract at residues 383–405 (TAAEEPTPAPTSPDLEIGDLDDQ) is disordered.

This sequence belongs to the DNA mismatch repair MutL/HexB family.

Functionally, this protein is involved in the repair of mismatches in DNA. It is required for dam-dependent methyl-directed DNA mismatch repair. May act as a 'molecular matchmaker', a protein that promotes the formation of a stable complex between two or more DNA-binding proteins in an ATP-dependent manner without itself being part of a final effector complex. The sequence is that of DNA mismatch repair protein MutL from Lacticaseibacillus casei (strain BL23) (Lactobacillus casei).